We begin with the raw amino-acid sequence, 54 residues long: Ribulose bisphosphate carboxylase large chain (54 aa).

Residues 1-2 (MS) constitute a propeptide that is removed on maturation. Residue Pro3 is modified to N-acetylproline. Lys14 is subject to N6,N6,N6-trimethyllysine.

It belongs to the RuBisCO large chain family. Type I subfamily. Heterohexadecamer of 8 large chains and 8 small chains.

Its subcellular location is the plastid. The protein localises to the chloroplast. The enzyme catalyses 2 (2R)-3-phosphoglycerate + 2 H(+) = D-ribulose 1,5-bisphosphate + CO2 + H2O. It carries out the reaction D-ribulose 1,5-bisphosphate + O2 = 2-phosphoglycolate + (2R)-3-phosphoglycerate + 2 H(+). RuBisCO catalyzes two reactions: the carboxylation of D-ribulose 1,5-bisphosphate, the primary event in carbon dioxide fixation, as well as the oxidative fragmentation of the pentose substrate in the photorespiration process. Both reactions occur simultaneously and in competition at the same active site. This is Ribulose bisphosphate carboxylase large chain (rbcL) from Icacina mannii.